The sequence spans 147 residues: Angiogenin (147 aa).

The signal sequence occupies residues 1–24; sequence MVILLGPLLLVFMLGLGLAPLSLA. Histidine 37 (proton acceptor) is an active-site residue. 2 residues coordinate tRNA: arginine 45 and aspartate 46. Cystine bridges form between cysteine 50-cysteine 104, cysteine 63-cysteine 115, and cysteine 81-cysteine 130. The Nucleolar localization signal signature appears at 55-59; it reads KQRGL. The tRNA site is built by cysteine 104 and isoleucine 126. Residue histidine 137 is the Proton donor of the active site.

The protein belongs to the pancreatic ribonuclease family. In terms of assembly, homodimer. Interacts with RNH1; inhibiting ANG ribonuclease activity. Interacts with PCNA.

The protein resides in the secreted. It localises to the nucleus. It is found in the nucleolus. Its subcellular location is the cytoplasm. The protein localises to the stress granule. Its activity is regulated as follows. Has weak tRNA ribonuclease activity by itself due to partial autoinhibition by its C-terminus, which folds into a short alpha-helix that partially occludes the substrate-binding site. In absence of stress, the ribonuclease activity is inhibited by RNH1 in the cytoplasm. In response to stress, dissociates from RNH1 in the cytoplasm and associates with cytoplasmic ribosomes with vacant A-sites: ribosomes directly activate the tRNA ribonuclease activity of ANG by refolding the C-terminal alpha-helix. In response to stress, the angiogenic activity of ANG is inhibited by RNH1 in the nucleus. In terms of biological role, secreted ribonuclease that can either promote or restrict cell proliferation of target cells, depending on the context. Endocytosed in target cells via its receptor PLXNB2 and translocates to the cytoplasm or nucleus. Under stress conditions, localizes to the cytoplasm and promotes the assembly of stress granules (SGs): specifically cleaves a subset of tRNAs within anticodon loops to produce tRNA-derived stress-induced fragments (tiRNAs), resulting in translation repression and inhibition of cell proliferation. tiRNas also prevent formation of apoptosome, thereby promoting cell survival. Preferentially cleaves RNAs between a pyrimidine and an adenosine residue, suggesting that it cleaves the anticodon loop of tRNA(Ala) (32-UUAGCAU-38) after positions 33 and 36. Cleaves a subset of tRNAs, including tRNA(Ala), tRNA(Glu), tRNA(Gly), tRNA(Lys), tRNA(Val), tRNA(His), tRNA(Asp) and tRNA(Sec). Under growth conditions and in differentiated cells, translocates to the nucleus and stimulates ribosomal RNA (rRNA) transcription, including that containing the initiation site sequences of 45S rRNA, thereby promoting cell growth and proliferation. Angiogenin induces vascularization of normal and malignant tissues via its ability to promote rRNA transcription. Involved in hematopoietic stem and progenitor cell (HSPC) growth and survival by promoting rRNA transcription in growth conditions and inhibiting translation in response to stress, respectively. Mediates the crosstalk between myeloid and intestinal epithelial cells to protect the intestinal epithelial barrier integrity: secreted by myeloid cells and promotes intestinal epithelial cells proliferation and survival. Also mediates osteoclast-endothelial cell crosstalk in growing bone: produced by osteoclasts and protects the neighboring vascular cells against senescence by promoting rRNA transcription. In Sus scrofa (Pig), this protein is Angiogenin (ANG).